Consider the following 587-residue polypeptide: Estrogen receptor (587 aa).

Positions 1–176 (MTLHTKTSGV…SMESTKETRY (176 aa)) are modulating (transactivation AF-1). 2 NR C4-type zinc fingers span residues 177–197 (CAVC…CEGC) and 213–237 (CPAT…LRKC). Positions 177-242 (CAVCNDYASG…RLRKCYEVGM (66 aa)) form a DNA-binding region, nuclear receptor. Residues 243 to 302 (MKGGIRKDRRGGRVMKQKRQREEQDSRNGEASSTELRAPTLWASPLVVKHNKKNSPALSL) form a hinge region. The interval 248 to 277 (RKDRRGGRVMKQKRQREEQDSRNGEASSTE) is disordered. Residues 249–261 (KDRRGGRVMKQKR) show a composition bias toward basic residues. The 237-residue stretch at 303 to 539 (TAEQMVSALL…DLLLEMLDAH (237 aa)) folds into the NR LBD domain. The interval 303–587 (TAEQMVSALL…KEEENMQNTL (285 aa)) is transactivation AF-2.

The protein belongs to the nuclear hormone receptor family. NR3 subfamily. As to quaternary structure, binds DNA as a homodimer. Can form a heterodimer with ER-beta.

It localises to the nucleus. Its function is as follows. The steroid hormones and their receptors are involved in the regulation of eukaryotic gene expression and affect cellular proliferation and differentiation in target tissues. This is Estrogen receptor (ESR1) from Taeniopygia guttata (Zebra finch).